A 343-amino-acid chain; its full sequence is Ribosomal RNA small subunit methyltransferase H (343 aa).

S-adenosyl-L-methionine contacts are provided by residues 39 to 41, Asp58, Phe87, Asp108, and Gln115; that span reads AGH.

It belongs to the methyltransferase superfamily. RsmH family.

The protein localises to the cytoplasm. It catalyses the reaction cytidine(1402) in 16S rRNA + S-adenosyl-L-methionine = N(4)-methylcytidine(1402) in 16S rRNA + S-adenosyl-L-homocysteine + H(+). Specifically methylates the N4 position of cytidine in position 1402 (C1402) of 16S rRNA. This chain is Ribosomal RNA small subunit methyltransferase H, found in Bifidobacterium adolescentis (strain ATCC 15703 / DSM 20083 / NCTC 11814 / E194a).